Reading from the N-terminus, the 355-residue chain is Protein-glutamate methylesterase/protein-glutamine glutaminase 3 (355 aa).

In terms of domain architecture, Response regulatory spans K5–R122. At D56 the chain carries 4-aspartylphosphate. The region spanning I165 to G355 is the CheB-type methylesterase domain. Residues S177, H203, and D299 contribute to the active site.

It belongs to the CheB family. In terms of processing, phosphorylated by CheA. Phosphorylation of the N-terminal regulatory domain activates the methylesterase activity.

The protein localises to the cytoplasm. The catalysed reaction is [protein]-L-glutamate 5-O-methyl ester + H2O = L-glutamyl-[protein] + methanol + H(+). It carries out the reaction L-glutaminyl-[protein] + H2O = L-glutamyl-[protein] + NH4(+). Its function is as follows. Involved in chemotaxis. Part of a chemotaxis signal transduction system that modulates chemotaxis in response to various stimuli. Catalyzes the demethylation of specific methylglutamate residues introduced into the chemoreceptors (methyl-accepting chemotaxis proteins or MCP) by CheR. Also mediates the irreversible deamidation of specific glutamine residues to glutamic acid. The chain is Protein-glutamate methylesterase/protein-glutamine glutaminase 3 from Geobacter metallireducens (strain ATCC 53774 / DSM 7210 / GS-15).